The sequence spans 233 residues: Lipoprotein-releasing system ATP-binding protein LolD (233 aa).

One can recognise an ABC transporter domain in the interval 6–233; the sequence is LQCDNLCKRY…TAELSLMGAE (228 aa). 42–49 provides a ligand contact to ATP; that stretch reads GSSGSGKS.

Belongs to the ABC transporter superfamily. Lipoprotein translocase (TC 3.A.1.125) family. As to quaternary structure, the complex is composed of two ATP-binding proteins (LolD) and two transmembrane proteins (LolC and LolE).

Its subcellular location is the cell inner membrane. Part of the ABC transporter complex LolCDE involved in the translocation of mature outer membrane-directed lipoproteins, from the inner membrane to the periplasmic chaperone, LolA. Responsible for the formation of the LolA-lipoprotein complex in an ATP-dependent manner. This chain is Lipoprotein-releasing system ATP-binding protein LolD, found in Salmonella choleraesuis (strain SC-B67).